The following is a 493-amino-acid chain: Glutamyl-tRNA(Gln) amidotransferase subunit A (493 aa).

Residues Lys79 and Ser159 each act as charge relay system in the active site. Residue Ser183 is the Acyl-ester intermediate of the active site.

The protein belongs to the amidase family. GatA subfamily. As to quaternary structure, heterotrimer of A, B and C subunits.

It carries out the reaction L-glutamyl-tRNA(Gln) + L-glutamine + ATP + H2O = L-glutaminyl-tRNA(Gln) + L-glutamate + ADP + phosphate + H(+). Functionally, allows the formation of correctly charged Gln-tRNA(Gln) through the transamidation of misacylated Glu-tRNA(Gln) in organisms which lack glutaminyl-tRNA synthetase. The reaction takes place in the presence of glutamine and ATP through an activated gamma-phospho-Glu-tRNA(Gln). In Rhizobium etli (strain ATCC 51251 / DSM 11541 / JCM 21823 / NBRC 15573 / CFN 42), this protein is Glutamyl-tRNA(Gln) amidotransferase subunit A.